The primary structure comprises 274 residues: Formamidopyrimidine-DNA glycosylase (274 aa).

Catalysis depends on Pro-2, which acts as the Schiff-base intermediate with DNA. The active-site Proton donor is the Glu-3. Lys-57 acts as the Proton donor; for beta-elimination activity in catalysis. DNA is bound by residues His-92, Arg-111, and Lys-152. The FPG-type zinc finger occupies 237 to 271; the sequence is QVYGRKGEECRECGTLIQAKVIGQRNSYFCPDCQP. Catalysis depends on Arg-261, which acts as the Proton donor; for delta-elimination activity.

This sequence belongs to the FPG family. Monomer. Zn(2+) serves as cofactor.

It catalyses the reaction Hydrolysis of DNA containing ring-opened 7-methylguanine residues, releasing 2,6-diamino-4-hydroxy-5-(N-methyl)formamidopyrimidine.. The catalysed reaction is 2'-deoxyribonucleotide-(2'-deoxyribose 5'-phosphate)-2'-deoxyribonucleotide-DNA = a 3'-end 2'-deoxyribonucleotide-(2,3-dehydro-2,3-deoxyribose 5'-phosphate)-DNA + a 5'-end 5'-phospho-2'-deoxyribonucleoside-DNA + H(+). In terms of biological role, involved in base excision repair of DNA damaged by oxidation or by mutagenic agents. Acts as a DNA glycosylase that recognizes and removes damaged bases. Has a preference for oxidized purines, such as 7,8-dihydro-8-oxoguanine (8-oxoG). Has AP (apurinic/apyrimidinic) lyase activity and introduces nicks in the DNA strand. Cleaves the DNA backbone by beta-delta elimination to generate a single-strand break at the site of the removed base with both 3'- and 5'-phosphates. The protein is Formamidopyrimidine-DNA glycosylase of Haemophilus ducreyi (strain 35000HP / ATCC 700724).